A 204-amino-acid chain; its full sequence is Small ribosomal subunit protein uS7 (204 aa).

An N-acetylmethionine modification is found at methionine 1. Position 2 is an N-acetylthreonine; in 40S ribosomal protein S5, N-terminally processed (threonine 2). A Phosphothreonine modification is found at threonine 14. Lysine 47 carries the post-translational modification N6-acetyllysine; alternate. A Glycyl lysine isopeptide (Lys-Gly) (interchain with G-Cter in SUMO2); alternate cross-link involves residue lysine 47. The residue at position 142 (serine 142) is a Phosphoserine.

The protein belongs to the universal ribosomal protein uS7 family. In terms of assembly, component of the small ribosomal subunit. Part of the small subunit (SSU) processome, composed of more than 70 proteins and the RNA chaperone small nucleolar RNA (snoRNA) U3.

The protein localises to the cytoplasm. It is found in the nucleus. It localises to the nucleolus. Component of the small ribosomal subunit. The ribosome is a large ribonucleoprotein complex responsible for the synthesis of proteins in the cell. Part of the small subunit (SSU) processome, first precursor of the small eukaryotic ribosomal subunit. During the assembly of the SSU processome in the nucleolus, many ribosome biogenesis factors, an RNA chaperone and ribosomal proteins associate with the nascent pre-rRNA and work in concert to generate RNA folding, modifications, rearrangements and cleavage as well as targeted degradation of pre-ribosomal RNA by the RNA exosome. The sequence is that of Small ribosomal subunit protein uS7 (RPS5) from Bos taurus (Bovine).